The chain runs to 1187 residues: uncharacterized protein (1187 aa).

5 disordered regions span residues 302-405 (QKSQ…KPVG), 419-451 (QAFS…RASK), 511-551 (KAPG…LRLE), 1095-1134 (KSQR…KLPD), and 1148-1187 (PHLP…PASL). A compositionally biased stretch (low complexity) spans 321–333 (LPLSGPAGAPPLG). Residues 352-361 (SRRKARHKAS) are compositionally biased toward basic residues. 2 stretches are compositionally biased toward low complexity: residues 422-435 (SPLL…SPAA) and 517-534 (GTTL…GEPP). The span at 1096-1107 (SQRTPQGEQSRN) shows a compositional bias: polar residues. A compositionally biased stretch (low complexity) spans 1160–1174 (TGGSFSSEGTGSQTS).

This is an uncharacterized protein from Mus musculus (Mouse).